The chain runs to 384 residues: Bifunctional enzyme IspD/IspF (384 aa).

2-C-methyl-D-erythritol 4-phosphate cytidylyltransferase regions lie at residues 1–227 and 1–228; these read MAKV…EGEQ and MAKV…GEQR. The interval 228 to 384 is 2-C-methyl-D-erythritol 2,4-cyclodiphosphate synthase; that stretch reads RIGSGFDVHR…QATALITLPF (157 aa). Residues Asp-234 and His-236 each coordinate a divalent metal cation. Residues 234 to 236 and 260 to 261 each bind 4-CDP-2-C-methyl-D-erythritol 2-phosphate; these read DVH and HS. An a divalent metal cation-binding site is contributed by His-268. 4-CDP-2-C-methyl-D-erythritol 2-phosphate-binding positions include 282–284, 358–361, Phe-365, and Arg-368; these read DIG and TTTE.

It in the N-terminal section; belongs to the IspD/TarI cytidylyltransferase family. IspD subfamily. This sequence in the C-terminal section; belongs to the IspF family. A divalent metal cation serves as cofactor.

It carries out the reaction 2-C-methyl-D-erythritol 4-phosphate + CTP + H(+) = 4-CDP-2-C-methyl-D-erythritol + diphosphate. The catalysed reaction is 4-CDP-2-C-methyl-D-erythritol 2-phosphate = 2-C-methyl-D-erythritol 2,4-cyclic diphosphate + CMP. Its pathway is isoprenoid biosynthesis; isopentenyl diphosphate biosynthesis via DXP pathway; isopentenyl diphosphate from 1-deoxy-D-xylulose 5-phosphate: step 2/6. It functions in the pathway isoprenoid biosynthesis; isopentenyl diphosphate biosynthesis via DXP pathway; isopentenyl diphosphate from 1-deoxy-D-xylulose 5-phosphate: step 4/6. Functionally, bifunctional enzyme that catalyzes the formation of 4-diphosphocytidyl-2-C-methyl-D-erythritol from CTP and 2-C-methyl-D-erythritol 4-phosphate (MEP) (IspD), and catalyzes the conversion of 4-diphosphocytidyl-2-C-methyl-D-erythritol 2-phosphate (CDP-ME2P) to 2-C-methyl-D-erythritol 2,4-cyclodiphosphate (ME-CPP) with a corresponding release of cytidine 5-monophosphate (CMP) (IspF). The protein is Bifunctional enzyme IspD/IspF of Rhodospirillum rubrum (strain ATCC 11170 / ATH 1.1.1 / DSM 467 / LMG 4362 / NCIMB 8255 / S1).